The chain runs to 699 residues: Polyribonucleotide nucleotidyltransferase (699 aa).

Positions 485 and 491 each coordinate Mg(2+). Residues 552–611 (PRITTIKINPEKIRDVIGKGGAVIRALTEETGTTIELEDDGTVKIASSNGEATKEAIRRI) enclose the KH domain. The 69-residue stretch at 621-689 (GRIYNGKVIR…RQGRVRLSIK (69 aa)) folds into the S1 motif domain.

It belongs to the polyribonucleotide nucleotidyltransferase family. In terms of assembly, component of the RNA degradosome, which is a multiprotein complex involved in RNA processing and mRNA degradation. Mg(2+) is required as a cofactor.

It localises to the cytoplasm. The catalysed reaction is RNA(n+1) + phosphate = RNA(n) + a ribonucleoside 5'-diphosphate. Functionally, involved in mRNA degradation. Catalyzes the phosphorolysis of single-stranded polyribonucleotides processively in the 3'- to 5'-direction. The chain is Polyribonucleotide nucleotidyltransferase from Shewanella oneidensis (strain ATCC 700550 / JCM 31522 / CIP 106686 / LMG 19005 / NCIMB 14063 / MR-1).